The chain runs to 53 residues: Membrane antigen containing repeating peptides (53 aa).

6 consecutive repeat copies span residues 1-10 (EAEEAARLQA), 11-20 (EAEEAARQQA), 21-30 (EAEEAARLQA), 31-40 (EAEEAARLQA), 41-50 (EAEEAARLQA), and 51-53 (EAE). Positions 1 to 53 (EAEEAARLQAEAEEAARQQAEAEEAARLQAEAEEAARLQAEAEEAARLQAEAE) are 6 X 10 AA tandem repeats. Positions 1 to 53 (EAEEAARLQAEAEEAARQQAEAEEAARLQAEAEEAARLQAEAEEAARLQAEAE) are disordered.

The protein resides in the membrane. The protein is Membrane antigen containing repeating peptides of Leishmania major.